Consider the following 524-residue polypeptide: RNA-binding protein 39 (524 aa).

Positions 1–146 (MADDIDIEAM…PVREPIDNLT (146 aa)) are disordered. An N-acetylalanine modification is found at Ala-2. Basic and acidic residues predominate over residues 14–32 (PYKKDENKLSSANGHEERS). 2 stretches are compositionally biased toward basic residues: residues 33–56 (KKRK…KERK) and 64–95 (KKSK…RGRY). A Phosphotyrosine modification is found at Tyr-95. Phosphoserine is present on residues Ser-97 and Ser-100. Residue Lys-111 forms a Glycyl lysine isopeptide (Lys-Gly) (interchain with G-Cter in SUMO2) linkage. A Phosphoserine modification is found at Ser-117. Residue Lys-119 forms a Glycyl lysine isopeptide (Lys-Gly) (interchain with G-Cter in SUMO2) linkage. Residues 119 to 130 (KLSRRRSRSKSP) show a composition bias toward basic residues. Ser-121 and Ser-136 each carry phosphoserine. Over residues 131-146 (FRKDKSPVREPIDNLT) the composition is skewed to basic and acidic residues. Position 146 is a phosphothreonine (Thr-146). Residues 153 to 230 (RTVFCMQLAA…VPIIVQASQA (78 aa)) enclose the RRM 1 domain. A Glycyl lysine isopeptide (Lys-Gly) (interchain with G-Cter in SUMO2) cross-link involves residue Lys-244. An RRM 2 domain is found at 250-328 (MRLYVGSLHF…RPMKVGHVTE (79 aa)). The interval 291-355 (KGYGFITFSD…RTGIDLGTTG (65 aa)) is activating domain. The tract at residues 291–400 (KGYGFITFSD…ADLQTRLSQQ (110 aa)) is interaction with JUN. Residues Ser-334, Ser-337, and Ser-341 each carry the phosphoserine modification. The segment at 355–400 (GRLQLMARLAEGTGLQIPPAAQQALQMSGSLAFGAVADLQTRLSQQ) is interaction with ESR1 and ESR2. The tract at residues 400–524 (QTEASALAAA…ATQLLVPSRR (125 aa)) is interaction with NCOA6. Residues 439–502 (EIKDDVIEEC…KMITAAYVPL (64 aa)) form the RRM 3 domain.

The protein belongs to the splicing factor SR family. In terms of assembly, interacts with NCOA6 and JUN. Interacts with ESR1 and ESR2, in the presence of estradiol (E2). Interacts with RSRC1 (via Arg/Ser-rich domain). Interacts with SF3B1. Interacts with ZNF106 (via N-terminus).

The protein resides in the nucleus speckle. In terms of biological role, RNA-binding protein that acts as a pre-mRNA splicing factor. Acts by promoting exon inclusion via regulation of exon cassette splicing. Also acts as a transcriptional coactivator for steroid nuclear receptors ESR1/ER-alpha and ESR2/ER-beta, and JUN/AP-1, independently of the pre-mRNA splicing factor activity. The chain is RNA-binding protein 39 (RBM39) from Pongo abelii (Sumatran orangutan).